The following is a 382-amino-acid chain: Anhydro-N-acetylmuramic acid kinase (382 aa).

Position 22-29 (22-29) interacts with ATP; that stretch reads GTSMDGVD.

Belongs to the anhydro-N-acetylmuramic acid kinase family.

It carries out the reaction 1,6-anhydro-N-acetyl-beta-muramate + ATP + H2O = N-acetyl-D-muramate 6-phosphate + ADP + H(+). The protein operates within amino-sugar metabolism; 1,6-anhydro-N-acetylmuramate degradation. It participates in cell wall biogenesis; peptidoglycan recycling. Its function is as follows. Catalyzes the specific phosphorylation of 1,6-anhydro-N-acetylmuramic acid (anhMurNAc) with the simultaneous cleavage of the 1,6-anhydro ring, generating MurNAc-6-P. Is required for the utilization of anhMurNAc either imported from the medium or derived from its own cell wall murein, and thus plays a role in cell wall recycling. This chain is Anhydro-N-acetylmuramic acid kinase, found in Burkholderia vietnamiensis (strain G4 / LMG 22486) (Burkholderia cepacia (strain R1808)).